The chain runs to 535 residues: Calcium-dependent protein kinase 5 (535 aa).

The tract at residues 1–46 (MGNACRGSFGGKTFQGYPQPQDHSESNSNPKHNSDSPKPKKEQQPL) is disordered. G2 carries N-myristoyl glycine lipidation. C5 carries S-palmitoyl cysteine lipidation. Positions 32–43 (HNSDSPKPKKEQ) are enriched in basic and acidic residues. The Protein kinase domain maps to 72–330 (YTLGRKLGQG…AHEVLCHPWI (259 aa)). ATP is bound by residues 78–86 (LGQGQFGTT) and K101. D196 (proton acceptor) is an active-site residue. Residues 336–366 (APDRALDPAVLSRLKHFSAMNKLKKMALRVI) are autoinhibitory domain. EF-hand domains lie at 373–408 (EEIAGLKEMFKAMDTDNSGAITFDELKAGLRKYGST), 409–444 (LKDIEIRELMDAADVDNSGTIDYGEFIAATIHLNKL), 445–480 (DREEHLMAAFQYFDKDGSGYITVDELQQACADHNIT), and 484–514 (FEDIIREVDQDNDGRIDYGEFVAMMQKGNPC). Ca(2+)-binding residues include D386, D388, S390, E397, D422, D424, S426, T428, E433, D458, D460, S462, Y464, E469, D492, D494, D496, R498, and E503.

It belongs to the protein kinase superfamily. Ser/Thr protein kinase family. CDPK subfamily.

Its subcellular location is the cell membrane. It carries out the reaction L-seryl-[protein] + ATP = O-phospho-L-seryl-[protein] + ADP + H(+). The enzyme catalyses L-threonyl-[protein] + ATP = O-phospho-L-threonyl-[protein] + ADP + H(+). Its activity is regulated as follows. Activated by calcium. Autophosphorylation may play an important role in the regulation of the kinase activity. Its function is as follows. Regulates the production of reactive oxygen species (ROS) by NADPH oxidase. The chain is Calcium-dependent protein kinase 5 (CPK5) from Solanum tuberosum (Potato).